Consider the following 98-residue polypeptide: NADH-ubiquinone oxidoreductase chain 4L (98 aa).

3 helical membrane passes run 1-21 (MSSIYMNILLAFTMALLGLLM), 29-49 (SLLCLEGMMLSLFILSTVTML), and 61-81 (VMLMVFAACEAAVGLALLVTV).

It belongs to the complex I subunit 4L family. As to quaternary structure, core subunit of respiratory chain NADH dehydrogenase (Complex I) which is composed of 45 different subunits.

Its subcellular location is the mitochondrion inner membrane. It catalyses the reaction a ubiquinone + NADH + 5 H(+)(in) = a ubiquinol + NAD(+) + 4 H(+)(out). Its function is as follows. Core subunit of the mitochondrial membrane respiratory chain NADH dehydrogenase (Complex I) which catalyzes electron transfer from NADH through the respiratory chain, using ubiquinone as an electron acceptor. Part of the enzyme membrane arm which is embedded in the lipid bilayer and involved in proton translocation. In Tamandua tetradactyla (Southern anteater), this protein is NADH-ubiquinone oxidoreductase chain 4L (MT-ND4L).